A 72-amino-acid polypeptide reads, in one-letter code: Cytochrome b-c1 complex subunit 9 (72 aa).

Residues 1–27 (MESAARRSGGGVLEGFYRLVMRRTPVY) lie on the Mitochondrial matrix side of the membrane. Residues 28-53 (VTFVIAGALLGERAVDYGVKTLWEKN) form a helical membrane-spanning segment. The Mitochondrial intermembrane portion of the chain corresponds to 54 to 72 (NVGKRYEDISVLGQRPVDE).

The protein belongs to the UQCR10/QCR9 family. Component of the ubiquinol-cytochrome c oxidoreductase (cytochrome b-c1 complex, complex III, CIII), a multisubunit enzyme composed of 3 respiratory subunits cytochrome b, cytochrome c1 and Rieske protein, 2 core protein subunits, and additional low-molecular weight protein subunits. The complex exists as an obligatory dimer and forms supercomplexes (SCs) in the inner mitochondrial membrane with cytochrome c oxidase (complex IV, CIV).

Its subcellular location is the mitochondrion inner membrane. In terms of biological role, component of the ubiquinol-cytochrome c oxidoreductase, a multisubunit transmembrane complex that is part of the mitochondrial electron transport chain which drives oxidative phosphorylation. The respiratory chain contains 3 multisubunit complexes succinate dehydrogenase (complex II, CII), ubiquinol-cytochrome c oxidoreductase (cytochrome b-c1 complex, complex III, CIII) and cytochrome c oxidase (complex IV, CIV), that cooperate to transfer electrons derived from NADH and succinate to molecular oxygen, creating an electrochemical gradient over the inner membrane that drives transmembrane transport and the ATP synthase. The cytochrome b-c1 complex catalyzes electron transfer from ubiquinol to cytochrome c, linking this redox reaction to translocation of protons across the mitochondrial inner membrane, with protons being carried across the membrane as hydrogens on the quinol. In the process called Q cycle, 2 protons are consumed from the matrix, 4 protons are released into the intermembrane space and 2 electrons are passed to cytochrome c. The polypeptide is Cytochrome b-c1 complex subunit 9 (Solanum tuberosum (Potato)).